The following is a 376-amino-acid chain: Actin-related protein T1 (376 aa).

The protein belongs to the actin family. In terms of tissue distribution, in skin, expressed in the basal, spinous and granular layers of the epidermis. Also expressed in hair follicles, sebaceaous glands, eccrine sweat glands and semen.

The protein localises to the cytoplasm. Its subcellular location is the cytoskeleton. It is found in the nucleus. The protein resides in the cytoplasmic vesicle. It localises to the secretory vesicle. The protein localises to the acrosome. Negatively regulates the Hedgehog (SHH) signaling. Binds to the promoter of the SHH signaling mediator, GLI1, and inhibits its expression. This Homo sapiens (Human) protein is Actin-related protein T1.